The chain runs to 469 residues: Cold shock protein CS66 (469 aa).

21 repeat units span residues 9-31 (GEKKGIMEKIKEKLPGGHGDHKE), 49-62 (TGGAYGQEGHTGTT), 72-94 (GEKKGVMENIKDKLPGGHADHQQ), 95-108 (TGGTYGQQGHTGTA), 115-128 (TGGTYGQQGHTGTA), 135-148 (TNGTYGEHGHTGTA), 149-162 (TGGSYGEQRHTGVT), 170-192 (GEKKSLMENIKEKLPGGHGDNQQ), 193-206 (TAGTYGQQGHFATG), 213-226 (TGGTYGEQGHAGVT), 234-256 (GEKKGLMENIKDKLPGGHGDHQQ), 257-270 (TGGTYGQQGHTGAA), 277-290 (GGGTYEQHGHTGMT), 298-320 (GGKKGVMENIKDKLPGGHSDNQQ), 321-334 (TGGAYEQQGHTGAA), 341-354 (SGGTYEQHGHTGMT), 362-384 (GEKKAVMENIKDKLPGGHGDHQQ), 385-398 (TGGAYGQQGHTGTA), 405-418 (GGGTYEQHGNTGMT), 428-441 (TGGTHGQHGHTGTT), and 452-469 (GEKKSLMDKIKDKLPGQH). The 7 X 23 AA approximate repeats stretch occupies residues 9-390 (GEKKGIMEKI…DHQQTGGAYG (382 aa)). The 14 X 14 AA approximate repeats stretch occupies residues 49–441 (TGGAYGQEGH…HGQHGHTGTT (393 aa)). Residues 87-112 (GGHADHQQTGGTYGQQGHTGTATHGT) are disordered. Low complexity predominate over residues 93–112 (QQTGGTYGQQGHTGTATHGT). Over residues 203-214 (FATGTHGTPATG) the composition is skewed to low complexity. The disordered stretch occupies residues 203 to 469 (FATGTHGTPA…KIKDKLPGQH (267 aa)). Residues 233–254 (TGEKKGLMENIKDKLPGGHGDH) show a composition bias toward basic and acidic residues. Positions 255 to 274 (QQTGGTYGQQGHTGAATHGT) are enriched in low complexity. A compositionally biased stretch (gly residues) spans 288 to 301 (GMTGTGTHGTGGKK). Over residues 302-312 (GVMENIKDKLP) the composition is skewed to basic and acidic residues. A compositionally biased stretch (basic and acidic residues) spans 361-382 (TGEKKAVMENIKDKLPGGHGDH). Composition is skewed to low complexity over residues 383–402 (QQTGGAYGQQGHTGTATHGT) and 412–429 (HGNTGMTGTETHGTTATG). Residues 439 to 450 (GTTGTGTHGTDG) show a composition bias toward gly residues. The segment covering 451 to 469 (VGEKKSLMDKIKDKLPGQH) has biased composition (basic and acidic residues).

This sequence belongs to the plant dehydrin family.

May reduce intracellular freezing damage during winter by hydrogen-bonding to the lattice of the nascent ice crystals, thus modifying the structure and/or propagation of ice crystals. In Triticum aestivum (Wheat), this protein is Cold shock protein CS66 (CS66).